A 632-amino-acid polypeptide reads, in one-letter code: MNQYQAESYDVIVVGAGHAGSEAALAAARMGVKTLLLTINLDMVAFMPCNPSVGGPAKGVVVREIDALGGEMGKNIDKTYIQMRMLNTGKGPAVRALRAQADKHAYATEMKHTIEKEENLTLRQGIVEELIVEDGVCRGVVTSTGAAYRSQAVVITAGTALRGEIIIGELKYSSGPNNSQPSVGLANHLKELGLEIDRFKTGTPPRVKSSTIDYSVTEEQPGDKEPNHFSYSTPDSAYNQNQEPCWLTYTNETTHEIIQKNLHRAPMFTGIVEGVGARYCPSIEDKIVRFADKPRHQLFLEPEGLNTEEVYVQGLSTSLPEDVQTEMLHSIEGLEKVEMMRTGYAIEYDVVVPHQLRPTLETKVIENLYTAGQTNGTSGYEEAAGQGLMAGINAALKIQGKEPLVLKRSDGYIGVMIDDLVTKGTNEPYRLLTSRAEYRLILRHDNADLRLTEMGHEIGLVKEEQYAAYLVKKAAVEAEIARLGKHRIKPTKEVQAFLETKGAAGLKDGILARDFLKRPEISYQEVAQFIPAPEEALDPKVIEQVEIQIKYEGYIKKAMEKVEKLKRMEAKRIPENIDYQAINGLATEAKQKLQKIQPETIAQASRISGVNPADISILMVYIEQGKIAKVQG.

FAD-binding positions include 15–20, valine 127, and serine 182; that span reads GAGHAG. Residue 276–290 participates in NAD(+) binding; that stretch reads GARYCPSIEDKIVRF. Glutamine 373 is an FAD binding site.

It belongs to the MnmG family. In terms of assembly, homodimer. Heterotetramer of two MnmE and two MnmG subunits. FAD is required as a cofactor.

It is found in the cytoplasm. NAD-binding protein involved in the addition of a carboxymethylaminomethyl (cmnm) group at the wobble position (U34) of certain tRNAs, forming tRNA-cmnm(5)s(2)U34. The chain is tRNA uridine 5-carboxymethylaminomethyl modification enzyme MnmG from Enterococcus faecalis (strain ATCC 700802 / V583).